We begin with the raw amino-acid sequence, 64 residues long: Large ribosomal subunit protein bL35 (64 aa).

Residues 1-15 (MPKNKTHSGTAKRFR) are compositionally biased toward basic residues. The interval 1 to 27 (MPKNKTHSGTAKRFRVTGSGKLRREQA) is disordered.

Belongs to the bacterial ribosomal protein bL35 family.

The protein is Large ribosomal subunit protein bL35 of Saccharopolyspora erythraea (strain ATCC 11635 / DSM 40517 / JCM 4748 / NBRC 13426 / NCIMB 8594 / NRRL 2338).